A 59-amino-acid chain; its full sequence is Alpha-like toxin CsEv5 (59 aa).

Residues lysine 1–cysteine 59 enclose the LCN-type CS-alpha/beta domain. 4 disulfide bridges follow: cysteine 11–cysteine 59, cysteine 15–cysteine 35, cysteine 21–cysteine 40, and cysteine 25–cysteine 42.

The protein belongs to the long (4 C-C) scorpion toxin superfamily. Sodium channel inhibitor family. In terms of tissue distribution, expressed by the venom gland.

It is found in the secreted. Binds voltage-independently sodium channels (Nav) and inhibits the inactivation of the activated channels, thereby blocking neuronal transmission. Is highly toxic to insects and barely toxic to mammals. As it does not compete with the classical alpha-toxin AaH2, this toxin is considered as an alpha-like toxin. This is Alpha-like toxin CsEv5 from Centruroides sculpturatus (Arizona bark scorpion).